Here is a 127-residue protein sequence, read N- to C-terminus: Aspartate 1-decarboxylase (127 aa).

Ser-25 acts as the Schiff-base intermediate with substrate; via pyruvic acid in catalysis. Ser-25 bears the Pyruvic acid (Ser) mark. Substrate is bound at residue Thr-57. Tyr-58 acts as the Proton donor in catalysis. Substrate is bound at residue 73-75; sequence GSA.

The protein belongs to the PanD family. Heterooctamer of four alpha and four beta subunits. It depends on pyruvate as a cofactor. Is synthesized initially as an inactive proenzyme, which is activated by self-cleavage at a specific serine bond to produce a beta-subunit with a hydroxyl group at its C-terminus and an alpha-subunit with a pyruvoyl group at its N-terminus.

The protein resides in the cytoplasm. The catalysed reaction is L-aspartate + H(+) = beta-alanine + CO2. It participates in cofactor biosynthesis; (R)-pantothenate biosynthesis; beta-alanine from L-aspartate: step 1/1. Functionally, catalyzes the pyruvoyl-dependent decarboxylation of aspartate to produce beta-alanine. This is Aspartate 1-decarboxylase from Polaromonas naphthalenivorans (strain CJ2).